Reading from the N-terminus, the 467-residue chain is Inactive pancreatic lipase-related protein 1 (467 aa).

The N-terminal stretch at 1–17 is a signal peptide; sequence MVSIWTIALFLLGAAKA. Cystine bridges form between C21-C27 and C109-C120. N157 carries N-linked (GlcNAc...) asparagine glycosylation. S171 serves as the catalytic Nucleophile. D194 functions as the Charge relay system in the catalytic mechanism. 4 residues coordinate Ca(2+): E205, R208, D210, and D213. An intrachain disulfide couples C255 to C279. The active-site Charge relay system is H281. Intrachain disulfides connect C303–C314, C317–C322, and C451–C467. The PLAT domain occupies 356–467; that stretch reads WRYGVSITLS…EDVLLTLTPC (112 aa).

This sequence belongs to the AB hydrolase superfamily. Lipase family. Detected in pancreas (at protein level).

The protein localises to the secreted. May function as inhibitor of dietary triglyceride digestion. Lacks detectable lipase activity towards triglycerides, diglycerides, phosphatidylcholine, galactolipids or cholesterol esters (in vitro). The chain is Inactive pancreatic lipase-related protein 1 (PNLIPRP1) from Canis lupus familiaris (Dog).